Here is a 241-residue protein sequence, read N- to C-terminus: Attacin-C (241 aa).

The N-terminal stretch at 1 to 21 (MSKIVLLIVVIVGVLGSLAVA) is a signal peptide. Residues 22–23 (LP) constitute a propeptide that is removed on maturation. Gln24 carries the post-translational modification Pyrrolidone carboxylic acid. Thr39 carries O-linked (GalNAc...) threonine glycosylation. Ser127 is modified (phosphoserine).

This sequence belongs to the attacin/sarcotoxin-2 family. Hemolymph (at protein level).

It is found in the secreted. Functionally, has antimicrobial activity in synergy with other peptides. Strongest activity observed against E.cloacae. This is Attacin-C from Drosophila melanogaster (Fruit fly).